Here is a 283-residue protein sequence, read N- to C-terminus: Lipoyl synthase (283 aa).

Residues Cys35, Cys40, Cys46, Cys61, Cys65, Cys68, and Ser273 each contribute to the [4Fe-4S] cluster site. The Radical SAM core domain occupies 47–262; sequence FRERQATFLI…RAAALATGFA (216 aa).

This sequence belongs to the radical SAM superfamily. Lipoyl synthase family. [4Fe-4S] cluster serves as cofactor.

Its subcellular location is the cytoplasm. It catalyses the reaction [[Fe-S] cluster scaffold protein carrying a second [4Fe-4S](2+) cluster] + N(6)-octanoyl-L-lysyl-[protein] + 2 oxidized [2Fe-2S]-[ferredoxin] + 2 S-adenosyl-L-methionine + 4 H(+) = [[Fe-S] cluster scaffold protein] + N(6)-[(R)-dihydrolipoyl]-L-lysyl-[protein] + 4 Fe(3+) + 2 hydrogen sulfide + 2 5'-deoxyadenosine + 2 L-methionine + 2 reduced [2Fe-2S]-[ferredoxin]. Its pathway is protein modification; protein lipoylation via endogenous pathway; protein N(6)-(lipoyl)lysine from octanoyl-[acyl-carrier-protein]: step 2/2. Its function is as follows. Catalyzes the radical-mediated insertion of two sulfur atoms into the C-6 and C-8 positions of the octanoyl moiety bound to the lipoyl domains of lipoate-dependent enzymes, thereby converting the octanoylated domains into lipoylated derivatives. The chain is Lipoyl synthase from Geobacter metallireducens (strain ATCC 53774 / DSM 7210 / GS-15).